Consider the following 251-residue polypeptide: 1-(5-phosphoribosyl)-5-[(5-phosphoribosylamino)methylideneamino] imidazole-4-carboxamide isomerase (251 aa).

Catalysis depends on D8, which acts as the Proton acceptor. The Proton donor role is filled by D131.

Belongs to the HisA/HisF family.

Its subcellular location is the cytoplasm. The enzyme catalyses 1-(5-phospho-beta-D-ribosyl)-5-[(5-phospho-beta-D-ribosylamino)methylideneamino]imidazole-4-carboxamide = 5-[(5-phospho-1-deoxy-D-ribulos-1-ylimino)methylamino]-1-(5-phospho-beta-D-ribosyl)imidazole-4-carboxamide. It functions in the pathway amino-acid biosynthesis; L-histidine biosynthesis; L-histidine from 5-phospho-alpha-D-ribose 1-diphosphate: step 4/9. This is 1-(5-phosphoribosyl)-5-[(5-phosphoribosylamino)methylideneamino] imidazole-4-carboxamide isomerase from Burkholderia lata (strain ATCC 17760 / DSM 23089 / LMG 22485 / NCIMB 9086 / R18194 / 383).